We begin with the raw amino-acid sequence, 604 residues long: Kelch-like protein 15 (604 aa).

The BTB domain occupies 31-98 (LDVTLVIEDH…MYYGTIELSM (68 aa)). The BACK domain maps to 133-237 (CAEIMRLLDD…TPSSVFEKVK (105 aa)). Kelch repeat units lie at residues 328–379 (FVFL…VIGK), 381–426 (IYAV…VLNN), 428–473 (LFIT…NKSK), 489–542 (KLYV…VLDK), and 544–590 (IMVL…VCNL).

Homodimer. Dimerization does not affect PPP2R5B-binding, but is required for its proteasomal degradation. Interacts with CUL3. Directly interacts with PPP2R5B; this interaction leads to PPP2R5B proteasomal degradation. Interacts with RBBP8/CtIP; this interaction leads to RBBP8 proteasomal degradation. Interacts with PACMP micropeptide; interaction prevents ubiquitination and degradation of RBBP8/CtIP.

The protein localises to the nucleus. The protein operates within protein modification; protein ubiquitination. Substrate-specific adapter for CUL3 E3 ubiquitin-protein ligase complex. Acts as an adapter for CUL3 to target the serine/threonine-protein phosphatase 2A (PP2A) subunit PPP2R5B for ubiquitination and subsequent proteasomal degradation, thus promoting exchange with other regulatory subunits and regulating PP2A holoenzyme composition. Acts as an adapter for CUL3 to target the DNA-end resection factor RBBP8/CtIP for ubiquitination and subsequent proteasomal degradation. Through the regulation of RBBP8/CtIP protein turnover, plays a key role in DNA damage response, favoring DNA double-strand repair through error-prone non-homologous end joining (NHEJ) over error-free, RBBP8-mediated homologous recombination (HR). The polypeptide is Kelch-like protein 15 (Klhl15) (Mus musculus (Mouse)).